We begin with the raw amino-acid sequence, 717 residues long: MATPAAVNPPEMASDIPGSVTLPVAPMAATGQVRMAGAMPARGGKRRSGMDFDDEDGEGPSKFSRENHSEIERRRRNKMTQYITELSDMVPTCSALARKPDKLTILRMAVSHMKSMRGTGNKSTDGAYKPSFLTEQELKHLILEAADGFLFVVAAETGRVIYVSDSVTPVLNQPQSEWFGSTLYEQVHPDDVEKLREQLCTSENSMTGRILDLKTGTVKKEGQQSSMRMCMGSRRSFICRMRCGNAPLDHLPLNRITTMRKRFRNGLGPVKEGEAQYAVVHCTGYIKAWPPAGMTIPEEDADVGQGSKYCLVAIGRLQVTSSPVCMDMNGMSVPTEFLSRHNSDGIITFVDPRCISVIGYQPQDLLGKDILEFCHPEDQSHLRESFQQVVKLKGQVLSVMYRFRTKNREWMLIRTSSFTFQNPYSDEIEYIICTNTNVKQLQQQQAELEVHQRDGLSSYDLSQVPVPNLPAGVHEAGKSVEKADAIFSQERDPRFAEMFAGISASEKKMMSSASAAGTQQIYSQGSPFPSGHSGKAFSSSVVHVPGVNDIQSSSSTGQNMSQISRQLNQSQVAWTGSRPPFPGQQIPSQSSKTQSSPFGIGTSHTYPADPSSYSPLSSPATSSPSGNAYSSLANRTPGFAESGQSSGQFQGRPSEVWSQWQSQHHGQQSGEQHSHQQPGQTEVFQDMLPMPGDPTQGTGNYNIEDFADLGMFPPFSE.

2 disordered regions span residues 1–20 and 35–74; these read MATP…PGSV and MAGA…IERR. Arginine 42 carries the omega-N-methylarginine modification. The segment covering 63 to 73 has biased composition (basic and acidic residues); that stretch reads FSRENHSEIER. The bHLH domain occupies 63-116; the sequence is FSRENHSEIERRRRNKMTQYITELSDMVPTCSALARKPDKLTILRMAVSHMKSM. 2 PAS domains span residues 134–209 and 323–393; these read TEQE…MTGR and PVCM…VKLK. Residues 398–441 enclose the PAC domain; that stretch reads SVMYRFRTKNREWMLIRTSSFTFQNPYSDEIEYIICTNTNVKQL. The disordered stretch occupies residues 548 to 717; sequence NDIQSSSSTG…DLGMFPPFSE (170 aa). Composition is skewed to polar residues over residues 549-574 and 585-605; these read DIQS…QVAW and QIPS…TSHT. Residues 610-625 are compositionally biased toward low complexity; that stretch reads PSSYSPLSSPATSSPS. Polar residues predominate over residues 642–651; that stretch reads SGQSSGQFQG. The segment covering 658–680 has biased composition (low complexity); sequence SQWQSQHHGQQSGEQHSHQQPGQ.

As to quaternary structure, efficient DNA binding requires dimerization with another bHLH protein. Heterodimer with NPAS4. Heterodimer with SIM1. Heterodimer with the aryl hydrocarbon receptor (AHR) or the SIM1 protein. Interacts with TACC3.

It localises to the nucleus. Functionally, transcription factor that plays a role in the development of the hypothalamo-pituitary axis, postnatal brain growth, and visual and renal function. Specifically recognizes the xenobiotic response element (XRE). In Homo sapiens (Human), this protein is Aryl hydrocarbon receptor nuclear translocator 2 (ARNT2).